The sequence spans 613 residues: Zinc metalloproteinase-disintegrin-like VMP-III (613 aa).

Positions 1-20 (MIQVLLVTLCLAAFPYQGSS) are cleaved as a signal peptide. The propeptide occupies 21–190 (IILDSGNVND…KKASQLVVTP (170 aa)). Residues 200-396 (KYIELVIVAD…NRPPCILNKP (197 aa)) form the Peptidase M12B domain. Residue Glu203 participates in Ca(2+) binding. The N-linked (GlcNAc...) asparagine glycan is linked to Asn219. Residue Asp287 coordinates Ca(2+). Intrachain disulfides connect Cys311/Cys391, Cys351/Cys375, and Cys353/Cys358. Residue His336 coordinates Zn(2+). The active site involves Glu337. Residues His340 and His346 each contribute to the Zn(2+) site. Positions 391, 394, 406, 409, 411, 413, 416, and 419 each coordinate Ca(2+). Positions 404–490 (PPVCGNYFVE…ECPTDDFQRN (87 aa)) constitute a Disintegrin domain. 14 cysteine pairs are disulfide-bonded: Cys407–Cys436, Cys418–Cys431, Cys420–Cys426, Cys430–Cys453, Cys444–Cys450, Cys449–Cys475, Cys462–Cys482, Cys469–Cys501, Cys494–Cys506, Cys513–Cys563, Cys528–Cys574, Cys541–Cys551, Cys558–Cys600, and Cys594–Cys606. The D/ECD-tripeptide signature appears at 468–470 (ECD). Asn503 is a glycosylation site (N-linked (GlcNAc...) asparagine).

It belongs to the venom metalloproteinase (M12B) family. P-III subfamily. P-IIIa sub-subfamily. In terms of assembly, monomer. It depends on Zn(2+) as a cofactor. Expressed by the venom gland.

It is found in the secreted. Functionally, snake venom metalloproteinase that impairs hemostasis in the envenomed animal. This Agkistrodon piscivorus leucostoma (Western cottonmouth) protein is Zinc metalloproteinase-disintegrin-like VMP-III.